The following is a 293-amino-acid chain: Urease accessory protein UreD (293 aa).

The protein belongs to the UreD family. UreD, UreF and UreG form a complex that acts as a GTP-hydrolysis-dependent molecular chaperone, activating the urease apoprotein by helping to assemble the nickel containing metallocenter of UreC. The UreE protein probably delivers the nickel.

It localises to the cytoplasm. Required for maturation of urease via the functional incorporation of the urease nickel metallocenter. The sequence is that of Urease accessory protein UreD from Arthrobacter sp. (strain FB24).